The following is a 314-amino-acid chain: Probable cell division protein WhiA (314 aa).

The H-T-H motif DNA-binding region spans 274 to 308; sequence SLKELGEMVSTGPISKSGMNHRLRKLNELADKIRN.

Belongs to the WhiA family.

Involved in cell division and chromosome segregation. The sequence is that of Probable cell division protein WhiA from Staphylococcus epidermidis (strain ATCC 35984 / DSM 28319 / BCRC 17069 / CCUG 31568 / BM 3577 / RP62A).